Consider the following 462-residue polypeptide: Jasmonoyl--L-amino acid synthetase GH3.3 (462 aa).

Position 103 (serine 103) interacts with ATP. Jasmonate is bound at residue serine 106. Residues threonine 126, asparagine 172, and glycine 337–tryptophan 342 contribute to the ATP site. Threonine 170–tyrosine 174 lines the an L-alpha-amino acid pocket. Residues alanine 334 to glycine 337 and serine 339 each bind jasmonate.

It belongs to the IAA-amido conjugating enzyme family. In terms of tissue distribution, expressed in green shoots and flowers.

The enzyme catalyses a jasmonate + an L-alpha-amino acid + ATP = a jasmonyl-L-amino acid + AMP + diphosphate + H(+). Functionally, catalyzes the synthesis of jasmonate-amino acid conjugates by adenylation. Catalyzes the conjugation of jasmonate (JA) to Ile when expressed in a heterologous system (E.coli). Catalyzes in vitro the conjugation of jasmonate (JA) to Ile, Phe, Leu, Met, Val and Trp. May catalyze the synthesis of indole-3-acetic acid (IAA)-amino acid conjugates, providing a mechanism for the plant to cope with the presence of excess auxin. In Oryza sativa subsp. japonica (Rice), this protein is Jasmonoyl--L-amino acid synthetase GH3.3.